Here is a 415-residue protein sequence, read N- to C-terminus: Plasminogen activator inhibitor 2, macrophage (415 aa).

N-linked (GlcNAc...) asparagine glycans are attached at residues asparagine 23, asparagine 75, asparagine 261, and asparagine 339.

This sequence belongs to the serpin family. Ov-serpin subfamily. In terms of assembly, interacts with PSMB1. The signal sequence is not cleaved.

Its subcellular location is the cytoplasm. It is found in the secreted. The protein resides in the extracellular space. Its function is as follows. Inhibits urokinase-type plasminogen activator. The monocyte derived PAI-2 is distinct from the endothelial cell-derived PAI-1. Not required for normal murine development or survival. In Mus musculus (Mouse), this protein is Plasminogen activator inhibitor 2, macrophage (Serpinb2).